A 179-amino-acid polypeptide reads, in one-letter code: Adenine phosphoribosyltransferase (179 aa).

This sequence belongs to the purine/pyrimidine phosphoribosyltransferase family. In terms of assembly, homodimer.

It is found in the cytoplasm. It catalyses the reaction AMP + diphosphate = 5-phospho-alpha-D-ribose 1-diphosphate + adenine. The protein operates within purine metabolism; AMP biosynthesis via salvage pathway; AMP from adenine: step 1/1. Catalyzes a salvage reaction resulting in the formation of AMP, that is energically less costly than de novo synthesis. The sequence is that of Adenine phosphoribosyltransferase from Helicobacter acinonychis (strain Sheeba).